Here is a 445-residue protein sequence, read N- to C-terminus: UDP-N-acetylmuramate--L-alanine ligase (445 aa).

108–114 contacts ATP; it reads GSDGKTT.

The protein belongs to the MurCDEF family.

The protein localises to the cytoplasm. It carries out the reaction UDP-N-acetyl-alpha-D-muramate + L-alanine + ATP = UDP-N-acetyl-alpha-D-muramoyl-L-alanine + ADP + phosphate + H(+). It functions in the pathway cell wall biogenesis; peptidoglycan biosynthesis. Cell wall formation. In Pseudothermotoga lettingae (strain ATCC BAA-301 / DSM 14385 / NBRC 107922 / TMO) (Thermotoga lettingae), this protein is UDP-N-acetylmuramate--L-alanine ligase.